Reading from the N-terminus, the 407-residue chain is Peptidase T (407 aa).

His-81 lines the Zn(2+) pocket. Asp-83 is an active-site residue. Asp-142 lines the Zn(2+) pocket. The active-site Proton acceptor is Glu-176. Zn(2+) is bound by residues Glu-177, Asp-199, and His-381.

The protein belongs to the peptidase M20B family. The cofactor is Zn(2+).

The protein resides in the cytoplasm. The catalysed reaction is Release of the N-terminal residue from a tripeptide.. Functionally, cleaves the N-terminal amino acid of tripeptides. The sequence is that of Peptidase T from Streptococcus sanguinis (strain SK36).